The chain runs to 1196 residues: Major DNA-binding protein (1196 aa).

A zinc finger spans residues 499–512; it reads CNLCTFDTRHACVH. 2 short sequence motifs (required for filament formation) span residues 843–844 and 1142–1144; these read FW and FNF. The tract at residues 1158 to 1196 is disordered; that stretch reads GGPGAPGPAFAGRKRAFHGDDPFGEGPPDKKGDLTLDML. The required for nuclear localization stretch occupies residues 1170-1196; it reads RKRAFHGDDPFGEGPPDKKGDLTLDML. Over residues 1174 to 1196 the composition is skewed to basic and acidic residues; sequence FHGDDPFGEGPPDKKGDLTLDML.

This sequence belongs to the herpesviridae major DNA-binding protein family. In terms of assembly, homooligomers. Forms double-helical filaments necessary for the formation of replication compartments within the host nucleus. Interacts with the origin-binding protein. Interacts with the helicase primase complex; this interaction stimulates primer synthesis activity of the helicase-primase complex. Interacts with the DNA polymerase. Interacts with the alkaline exonuclease; this interaction increases its nuclease processivity.

It is found in the host nucleus. In terms of biological role, plays several crucial roles in viral infection. Participates in the opening of the viral DNA origin to initiate replication by interacting with the origin-binding protein. May disrupt loops, hairpins and other secondary structures present on ssDNA to reduce and eliminate pausing of viral DNA polymerase at specific sites during elongation. Promotes viral DNA recombination by performing strand-transfer, characterized by the ability to transfer a DNA strand from a linear duplex to a complementary single-stranded DNA circle. Can also catalyze the renaturation of complementary single strands. Additionally, reorganizes the host cell nucleus, leading to the formation of prereplicative sites and replication compartments. This process is driven by the protein which can form double-helical filaments in the absence of DNA. This is Major DNA-binding protein from Human herpesvirus 1 (strain KOS) (HHV-1).